The primary structure comprises 304 residues: Acetylglutamate kinase (304 aa).

Residues 82–83, Arg104, and Asn197 each bind substrate; that span reads GG.

The protein belongs to the acetylglutamate kinase family. ArgB subfamily.

The protein localises to the cytoplasm. It carries out the reaction N-acetyl-L-glutamate + ATP = N-acetyl-L-glutamyl 5-phosphate + ADP. Its pathway is amino-acid biosynthesis; L-arginine biosynthesis; N(2)-acetyl-L-ornithine from L-glutamate: step 2/4. Functionally, catalyzes the ATP-dependent phosphorylation of N-acetyl-L-glutamate. The protein is Acetylglutamate kinase of Prochlorococcus marinus (strain NATL2A).